A 253-amino-acid polypeptide reads, in one-letter code: Phosphate import ATP-binding protein PstB (253 aa).

The ABC transporter domain maps to 7 to 249 (ASAKNLNLWY…PQSSKTKRYI (243 aa)). Residue 39–46 (GPSGCGKS) participates in ATP binding.

The protein belongs to the ABC transporter superfamily. Phosphate importer (TC 3.A.1.7) family. In terms of assembly, the complex is composed of two ATP-binding proteins (PstB), two transmembrane proteins (PstC and PstA) and a solute-binding protein (PstS).

It localises to the cell inner membrane. It catalyses the reaction phosphate(out) + ATP + H2O = ADP + 2 phosphate(in) + H(+). In terms of biological role, part of the ABC transporter complex PstSACB involved in phosphate import. Responsible for energy coupling to the transport system. This Ehrlichia ruminantium (strain Gardel) protein is Phosphate import ATP-binding protein PstB.